We begin with the raw amino-acid sequence, 322 residues long: Serine/threonine-protein phosphatase PP1 isozyme 6 (322 aa).

N-acetylmethionine is present on M1. Residues D61, H63, D89, and N121 each coordinate Mn(2+). Catalysis depends on H122, which acts as the Proton donor. Positions 170 and 245 each coordinate Mn(2+). The disordered stretch occupies residues 303 to 322; it reads GFNNNVPRPGTPPHKGGKGR.

This sequence belongs to the PPP phosphatase family. PP-1 subfamily. Mn(2+) serves as cofactor. In terms of tissue distribution, strongly up-regulated within developing flowers, especially in the tapetum, the developing and mature pollen and in the ovaries.

Its subcellular location is the nucleus. The protein localises to the cytoplasm. The enzyme catalyses O-phospho-L-seryl-[protein] + H2O = L-seryl-[protein] + phosphate. It carries out the reaction O-phospho-L-threonyl-[protein] + H2O = L-threonyl-[protein] + phosphate. Its activity is regulated as follows. Phosphatase activity is strongly reduced by the protein phosphatase inhibitor 2 (I-2). Its function is as follows. Serine/threonine-protein phosphatase that possesses phosphatase activity toward para-nitrophenyl phosphate (pNPP) in vitro. This chain is Serine/threonine-protein phosphatase PP1 isozyme 6, found in Arabidopsis thaliana (Mouse-ear cress).